Reading from the N-terminus, the 416-residue chain is tRNA (guanine-N(7)-)-methyltransferase non-catalytic subunit wuho (416 aa).

The disordered stretch occupies residues 47-88 (TQSQESCPATATSTTAGKEPGGKEQQLAKQPEEGGTSASGSV). Positions 49 to 62 (SQESCPATATSTTA) are enriched in polar residues. 4 WD repeats span residues 89-130 (ATST…ARLL), 177-216 (GHLSVVYDILWSEDQQHIITCDRDDKIRVTNYPATFDIHS), 220-258 (GHREFVSGLALLTEQHIASASGDKTLRVWNYIQGKELLQ), and 317-357 (AGSW…PTTN).

This sequence belongs to the WD repeat TRM82 family. As to quaternary structure, forms a heterodimer with the catalytic subunit Mettl1. Interacts with mei-P26 and weakly interacts with bgcn; required for the function or formation of the mei-P26-bgcn-bam-sxl complex. Interacts with nanos; may be involved in mei-P26-dependent derepression of the BMP signaling pathway. Interacts with Myc; the interaction may be mediated by mei-P26 and may be involved in the regulation of ribosome biogenesis. In testis, it is present at high level in hub cells, a niche for germline stem cells of testis. Ubiquitously expressed in all testicular cells throughout spermatogenesis. Ubiquitously expressed in all germline and somatic cells of the ovary.

It is found in the nucleus. The protein resides in the cytoplasm. The protein operates within tRNA modification; N(7)-methylguanine-tRNA biosynthesis. Required for the Mettl1-dependent formation of N(7)-methylguanine at position 46 (m7G46) in tRNA. In the Mettl1-wuho methyltransferase complex, it is required to stabilize and induce conformational changes of the catalytic subunit. Required for binding of nanos mRNA and repression of translation by the mei-P26-bgcn-bam-sxl complex. May cooperate with mei-P26 and nanos to derepress the BMP signaling pathway. May cooperate with mei-P26 to suppress expression of a subset of microRNAs. May cooperate with mei-P26 to regulate bam expression levels in germline cells during gametogenesis. Required to promote mitosis to meiosis transition during gametogenesis. May regulate germline cell division in part by regulating ribosome biogenesis. The sequence is that of tRNA (guanine-N(7)-)-methyltransferase non-catalytic subunit wuho from Drosophila erecta (Fruit fly).